A 254-amino-acid chain; its full sequence is Thiazole synthase (254 aa).

Residue lysine 95 is the Schiff-base intermediate with DXP of the active site. 1-deoxy-D-xylulose 5-phosphate is bound by residues glycine 156, 182–183 (AG), and 204–205 (NT).

The protein belongs to the ThiG family. Homotetramer. Forms heterodimers with either ThiH or ThiS.

It localises to the cytoplasm. It catalyses the reaction [ThiS sulfur-carrier protein]-C-terminal-Gly-aminoethanethioate + 2-iminoacetate + 1-deoxy-D-xylulose 5-phosphate = [ThiS sulfur-carrier protein]-C-terminal Gly-Gly + 2-[(2R,5Z)-2-carboxy-4-methylthiazol-5(2H)-ylidene]ethyl phosphate + 2 H2O + H(+). It participates in cofactor biosynthesis; thiamine diphosphate biosynthesis. Functionally, catalyzes the rearrangement of 1-deoxy-D-xylulose 5-phosphate (DXP) to produce the thiazole phosphate moiety of thiamine. Sulfur is provided by the thiocarboxylate moiety of the carrier protein ThiS. In vitro, sulfur can be provided by H(2)S. The protein is Thiazole synthase of Shewanella baltica (strain OS223).